We begin with the raw amino-acid sequence, 594 residues long: Nucleolar protein 56 (594 aa).

Glycyl lysine isopeptide (Lys-Gly) (interchain with G-Cter in SUMO2) cross-links involve residues lysine 87, lysine 230, and lysine 240. Positions valine 292–threonine 410 constitute a Nop domain. At serine 314 the chain carries Phosphoserine. Arginine 359 carries the post-translational modification Omega-N-methylarginine. Low complexity-rich tracts occupy residues alanine 458 to proline 469 and glutamine 488 to serine 504. The interval alanine 458–aspartate 594 is disordered. Phosphoserine is present on residues serine 466 and serine 467. At threonine 468 the chain carries Phosphothreonine. A phosphoserine mark is found at serine 511, serine 519, serine 520, and serine 537. Lysine 540 participates in a covalent cross-link: Glycyl lysine isopeptide (Lys-Gly) (interchain with G-Cter in SUMO2). Lysine 561 bears the N6-acetyllysine mark. The residue at position 563 (serine 563) is a Phosphoserine. Lysine 564 participates in a covalent cross-link: Glycyl lysine isopeptide (Lys-Gly) (interchain with G-Cter in SUMO2). Phosphoserine occurs at positions 569, 570, 579, and 581. Over residues serine 580–aspartate 594 the composition is skewed to basic residues.

This sequence belongs to the NOP5/NOP56 family. Part of a large pre-ribosomal ribonucleoprotein (RNP) complex, that consists of at least 62 ribosomal proteins, 45 nonribosomal proteins and both pre-rRNA and mature rRNA species. Within this complex directly interacts with TCOF1 in an RNA-independent manner. Core component of box C/D small nucleolar ribonucleoprotein (snoRNP) particles; the core proteins SNU13, NOP56, NOP58 and FBL or FBLL1 assemble stepwise onto the snoRNA. Interacts with NOP1 and NOP58. Interacts with NUFIP1, RUVBL1 and RUVBL2; RUVBL1:RUVBL2 seem to bridge the association of NOP56 with NUFIP1. Part of the small subunit (SSU) processome, composed of more than 70 proteins and the RNA chaperone small nucleolar RNA (snoRNA) U3. Interacts with NOP2 and FBL.

It localises to the nucleus. The protein resides in the nucleolus. It is found in the cytoplasm. The protein localises to the nucleoplasm. In terms of biological role, involved in the early to middle stages of 60S ribosomal subunit biogenesis. Required for the biogenesis of box C/D snoRNAs such U3, U8 and U14 snoRNAs. Part of the small subunit (SSU) processome, first precursor of the small eukaryotic ribosomal subunit. During the assembly of the SSU processome in the nucleolus, many ribosome biogenesis factors, an RNA chaperone and ribosomal proteins associate with the nascent pre-rRNA and work in concert to generate RNA folding, modifications, rearrangements and cleavage as well as targeted degradation of pre-ribosomal RNA by the RNA exosome. Core component of box C/D small nucleolar ribonucleoprotein (snoRNP) complexes that function in methylation of multiple sites on ribosomal RNAs (rRNAs) and messenger RNAs (mRNAs). This is Nucleolar protein 56 from Homo sapiens (Human).